The following is a 508-amino-acid chain: Probable cytochrome P450 6d5 (508 aa).

C453 lines the heme pocket.

Belongs to the cytochrome P450 family. Heme is required as a cofactor.

It is found in the endoplasmic reticulum membrane. It localises to the microsome membrane. May be involved in the metabolism of insect hormones and in the breakdown of synthetic insecticides. This is Probable cytochrome P450 6d5 (Cyp6d5) from Drosophila melanogaster (Fruit fly).